We begin with the raw amino-acid sequence, 144 residues long: Large ribosomal subunit protein uL16 (144 aa).

Belongs to the universal ribosomal protein uL16 family. Part of the 50S ribosomal subunit.

Its function is as follows. Binds 23S rRNA and is also seen to make contacts with the A and possibly P site tRNAs. The sequence is that of Large ribosomal subunit protein uL16 from Caldanaerobacter subterraneus subsp. tengcongensis (strain DSM 15242 / JCM 11007 / NBRC 100824 / MB4) (Thermoanaerobacter tengcongensis).